Here is a 113-residue protein sequence, read N- to C-terminus: UPF0060 membrane protein Mmcs_2513 (113 aa).

A run of 4 helical transmembrane segments spans residues A12 to V32, G37 to F57, I66 to D86, and R92 to P112.

This sequence belongs to the UPF0060 family.

It is found in the cell membrane. In Mycobacterium sp. (strain MCS), this protein is UPF0060 membrane protein Mmcs_2513.